The following is a 528-amino-acid chain: O-methylsterigmatocystin oxidoreductase (528 aa).

A heme-binding site is contributed by Cys-440.

The protein belongs to the cytochrome P450 family. Heme serves as cofactor.

It carries out the reaction 8-O-methylsterigmatocystin + 2 reduced [NADPH--hemoprotein reductase] + 2 O2 = aflatoxin B1 + methanol + 2 oxidized [NADPH--hemoprotein reductase] + CO2 + H2O + 2 H(+). The enzyme catalyses 8-O-methyldihydrosterigmatocystin + 2 reduced [NADPH--hemoprotein reductase] + 2 O2 = aflatoxin B2 + methanol + 2 oxidized [NADPH--hemoprotein reductase] + CO2 + H2O + 2 H(+). It functions in the pathway mycotoxin biosynthesis; aflatoxin biosynthesis. Converts O-methylsterigmatocystin (OMST) to aflatoxin B1 and converts dihydro-O-methylsterigmatocystin (DHOMST) to aflatoxin B2 in the aflatoxin biosynthesis pathway. The protein is O-methylsterigmatocystin oxidoreductase (ordA) of Aspergillus flavus.